A 256-amino-acid polypeptide reads, in one-letter code: Protein FixA (256 aa).

It belongs to the ETF beta-subunit/FixA family. In terms of assembly, heterodimer of FixA and FixB.

It functions in the pathway amine and polyamine metabolism; carnitine metabolism. Functionally, required for anaerobic carnitine reduction. May bring reductant to CaiA. This chain is Protein FixA, found in Salmonella paratyphi B (strain ATCC BAA-1250 / SPB7).